Reading from the N-terminus, the 292-residue chain is Elongation factor Ts (292 aa).

An involved in Mg(2+) ion dislocation from EF-Tu region spans residues 79 to 82 (TDFV).

It belongs to the EF-Ts family.

It localises to the cytoplasm. Its function is as follows. Associates with the EF-Tu.GDP complex and induces the exchange of GDP to GTP. It remains bound to the aminoacyl-tRNA.EF-Tu.GTP complex up to the GTP hydrolysis stage on the ribosome. The polypeptide is Elongation factor Ts (Xanthomonas oryzae pv. oryzae (strain MAFF 311018)).